We begin with the raw amino-acid sequence, 332 residues long: Ribosomal RNA small subunit methyltransferase C (332 aa).

The protein belongs to the methyltransferase superfamily. RsmC family. Monomer.

It localises to the cytoplasm. The catalysed reaction is guanosine(1207) in 16S rRNA + S-adenosyl-L-methionine = N(2)-methylguanosine(1207) in 16S rRNA + S-adenosyl-L-homocysteine + H(+). Specifically methylates the guanine in position 1207 of 16S rRNA in the 30S particle. The chain is Ribosomal RNA small subunit methyltransferase C from Pseudomonas putida (strain GB-1).